The chain runs to 398 residues: uncharacterized protein (398 aa).

6 helical membrane passes run 37-57 (LVILTIVAFFWGLLGVIFVQF), 92-112 (IFNAIFWLTQILFNVPFFIFG), 122-142 (LLTLYFVAVSNLFGFFFSYIP), 186-206 (LFYGLIWGFLQAVFYSVILII), 228-248 (IGGILMLINTVSFIIGYVIGT), and 268-288 (FGVAFFLSPNLVFTLLMNIVL).

It is found in the cell membrane. This is an uncharacterized protein from Mycoplasma genitalium (strain ATCC 33530 / DSM 19775 / NCTC 10195 / G37) (Mycoplasmoides genitalium).